Reading from the N-terminus, the 452-residue chain is Probable cysteine protease RD21C (452 aa).

The first 29 residues, 1–29, serve as a signal peptide directing secretion; it reads MATSIKSITLALLIFSVLLISLSLGSVTA. The propeptide at 30 to 128 is activation peptide; that stretch reads TETTRNEAEA…EKYLYKVGDS (99 aa). A glycan (N-linked (GlcNAc...) asparagine) is linked at Asn82. 5 cysteine pairs are disulfide-bonded: Cys150-Cys192, Cys184-Cys226, Cys284-Cys335, Cys363-Cys375, and Cys369-Cys390. The active site involves Cys153. Residues His290 and Asn310 contribute to the active site. Positions 346–452 are cleaved as a propeptide — removed in mature form; that stretch reads KSSGSNPPKP…KSTNMLVGSA (107 aa).

Belongs to the peptidase C1 family. As to quaternary structure, interacts with WSCP.

Functionally, probable thiol protease. This is Probable cysteine protease RD21C from Arabidopsis thaliana (Mouse-ear cress).